A 304-amino-acid polypeptide reads, in one-letter code: Cell surface-binding protein OPG105 (304 aa).

One can recognise an Alpha-carbonic anhydrase domain in the interval 1–235 (MPQQLSPINI…NDDTQVYYSG (235 aa)). Residues 1 to 275 (MPQQLSPINI…YQKYIEGNKT (275 aa)) are Virion surface-facing. The helical transmembrane segment at 276-294 (FAIIAIVFVFILTAILFLM) threads the bilayer. Residues 295-304 (SRRYSREKQN) are Intravirion-facing.

This sequence belongs to the alpha-carbonic anhydrase family. In terms of assembly, homodimer; disulfide-linked. Post-translationally, apparently non-glycosylated.

It localises to the virion membrane. In terms of biological role, binds to chondroitin sulfate on the cell surface to provide virion attachment to target cell. This Rabbitpox virus (strain Utrecht) (RPV) protein is Cell surface-binding protein OPG105 (OPG105).